A 283-amino-acid polypeptide reads, in one-letter code: Gap junction beta-1 protein (283 aa).

The Cytoplasmic portion of the chain corresponds to 1 to 22 (MNWTGLYTLLSGVNRHSTAIGR). Residues 23–45 (VWLSVIFIFRIMVLVVAAESVWG) traverse the membrane as a helical segment. At 46-75 (DEKSSFICNTLQPGCNSVCYDHFFPISHVR) the chain is on the extracellular side. Residues 76–95 (LWSLQLILVSTPALLVAMHV) traverse the membrane as a helical segment. The Cytoplasmic portion of the chain corresponds to 96–130 (AHQQHIEKKMLRLEGHGDPIHLEEVKRHKVHISGT). Residues 131 to 153 (LWWTYVISVVFRLLFEAAFMYVF) traverse the membrane as a helical segment. Topologically, residues 154–191 (YLLYPGYAMVRLVKCDAYPCPNTVDCFVSRPTEKTVFT) are extracellular. The helical transmembrane segment at 192–214 (VFMLAASGICIILNVAEVVYLIV) threads the bilayer. Residues 215-283 (RACARRAQRR…AEKSDRCSAC (69 aa)) are Cytoplasmic-facing. Ser233, Ser258, Ser266, and Ser277 each carry phosphoserine.

Belongs to the connexin family. Beta-type (group I) subfamily. A connexon is composed of a hexamer of connexins. Interacts with CNST.

The protein localises to the cell membrane. Its subcellular location is the cell junction. The protein resides in the gap junction. In terms of biological role, one gap junction consists of a cluster of closely packed pairs of transmembrane channels, the connexons, through which materials of low MW diffuse from one cell to a neighboring cell. The protein is Gap junction beta-1 protein (GJB1) of Equus caballus (Horse).